A 111-amino-acid chain; its full sequence is Putative G antigen family E member 3 (111 aa).

Residues 1–67 (MSEHVRTRSQ…EGAPAVQGPD (67 aa)) form a disordered region. Polar residues predominate over residues 8 to 24 (RSQSSERGNDQESSQPV). At T97 the chain carries Phosphothreonine.

The protein belongs to the GAGE family.

The protein is Putative G antigen family E member 3 (PAGE2B) of Homo sapiens (Human).